Here is a 496-residue protein sequence, read N- to C-terminus: Pseudooxynicotine dehydrogenase (496 aa).

The tat-type signal signal peptide spans 1 to 42 (MTKDGDEGSKSGVSRRKFLGSAAVGVATAGIASQLLTLSAPA). Positions 69, 88, 96, 113, 285, 461, and 471 each coordinate FAD.

The protein belongs to the flavin monoamine oxidase family. In terms of assembly, homodimer. FAD is required as a cofactor. Predicted to be exported by the Tat system. The position of the signal peptide cleavage has not been experimentally proven.

The protein localises to the periplasm. The enzyme catalyses pseudooxynicotine + 2 Fe(III)-[cytochrome c] + H2O = 4-oxo-4-(pyridin-3-yl)butanal + methylamine + 2 Fe(II)-[cytochrome c] + 2 H(+). It participates in alkaloid degradation; nicotine degradation. Its activity is regulated as follows. Strongly inhibited by Na(2)MoO(4) and FeCl(3). Activity is nearly twice as high in the presence of Na(2)WO(4). Functionally, involved in nicotine degradation. Catalyzes the deamination of pseudooxynicotine to 3-succinoylsemialdehyde-pyridine. Functions as a dehydrogenase that uses the c-type cytochrome protein CycN as the physiological electron acceptor. O(2) is a poor electron acceptor. Pnao is oxidized by CycN 230 times faster than O(2) at equivalent oxidant concentrations. This is Pseudooxynicotine dehydrogenase from Pseudomonas putida (strain DSM 28022 / S16).